The primary structure comprises 514 residues: Lysine--tRNA ligase (514 aa).

Mg(2+)-binding residues include E422 and E429.

It belongs to the class-II aminoacyl-tRNA synthetase family. In terms of assembly, homodimer. The cofactor is Mg(2+).

The protein resides in the cytoplasm. The enzyme catalyses tRNA(Lys) + L-lysine + ATP = L-lysyl-tRNA(Lys) + AMP + diphosphate. This Psychrobacter arcticus (strain DSM 17307 / VKM B-2377 / 273-4) protein is Lysine--tRNA ligase.